A 156-amino-acid polypeptide reads, in one-letter code: Dihydrofolate reductase (156 aa).

The DHFR domain occupies Met-1–Lys-156.

This sequence belongs to the dihydrofolate reductase family.

It catalyses the reaction (6S)-5,6,7,8-tetrahydrofolate + NADP(+) = 7,8-dihydrofolate + NADPH + H(+). The protein operates within cofactor biosynthesis; tetrahydrofolate biosynthesis; 5,6,7,8-tetrahydrofolate from 7,8-dihydrofolate: step 1/1. In terms of biological role, key enzyme in folate metabolism. Catalyzes an essential reaction for de novo glycine and purine synthesis, and for DNA precursor synthesis. This is Dihydrofolate reductase (folA) from Ureaplasma parvum serovar 3 (strain ATCC 700970).